Here is a 66-residue protein sequence, read N- to C-terminus: Protein I177L (66 aa).

N-linked (GlcNAc...) asparagine; by host glycosylation is present at asparagine 11.

The protein belongs to the asfivirus I177L family.

The protein resides in the virion. The sequence is that of Protein I177L from Ornithodoros (relapsing fever ticks).